A 72-amino-acid polypeptide reads, in one-letter code: DNA-directed RNA polymerase subunit Rpo10 (72 aa).

Zn(2+) contacts are provided by Cys7, Cys10, Cys54, and Cys55.

Belongs to the archaeal Rpo10/eukaryotic RPB10 RNA polymerase subunit family. Part of the RNA polymerase complex. Requires Zn(2+) as cofactor.

The protein resides in the cytoplasm. The enzyme catalyses RNA(n) + a ribonucleoside 5'-triphosphate = RNA(n+1) + diphosphate. Functionally, DNA-dependent RNA polymerase (RNAP) catalyzes the transcription of DNA into RNA using the four ribonucleoside triphosphates as substrates. This chain is DNA-directed RNA polymerase subunit Rpo10, found in Picrophilus torridus (strain ATCC 700027 / DSM 9790 / JCM 10055 / NBRC 100828 / KAW 2/3).